A 710-amino-acid chain; its full sequence is DNA-directed RNA polymerase III subunit RPC5 (710 aa).

Positions 146–155 are enriched in basic and acidic residues; it reads DAKHREREAA. Residues 146–169 form a disordered region; the sequence is DAKHREREAANEAGDSSQDEAEED. Phosphoserine is present on residues S161 and S162. K171 participates in a covalent cross-link: Glycyl lysine isopeptide (Lys-Gly) (interchain with G-Cter in SUMO2). At S192 the chain carries Phosphoserine. A Phosphotyrosine modification is found at Y224. Residue K432 forms a Glycyl lysine isopeptide (Lys-Gly) (interchain with G-Cter in SUMO2) linkage. A Glycyl lysine isopeptide (Lys-Gly) (interchain with G-Cter in SUMO1); alternate cross-link involves residue K498. Residue K498 forms a Glycyl lysine isopeptide (Lys-Gly) (interchain with G-Cter in SUMO2); alternate linkage. Residues 498-526 are disordered; that stretch reads KEEPLSEEEADGAELEAEEEEPMDTAPST. The span at 502 to 520 shows a compositional bias: acidic residues; sequence LSEEEADGAELEAEEEEPM. Position 503 is a phosphoserine (S503). The required for Pol III complex stability stretch occupies residues 558–710; it reads NPVACELKAF…MWYLKGTVQS (153 aa). K661 is covalently cross-linked (Glycyl lysine isopeptide (Lys-Gly) (interchain with G-Cter in SUMO2)).

In terms of assembly, component of the RNA polymerase III complex consisting of at least 17 subunits: a ten-subunit horseshoe-shaped catalytic core composed of POLR3A/RPC1, POLR3B/RPC2, POLR1C/RPAC1, POLR1D/RPAC2, POLR3K/RPC10, POLR2E/RPABC1, POLR2F/RPABC2, POLR2H/RPABC3, POLR2K/RPABC4 and POLR2L/RPABC5; the stalk composed of two subunits POLR3H/RPC8 and CRCP/RPC9, forming a structural mobile part that protrudes out of the core and functions primarily in transcription initiation; and additional subunits homologous to general transcription factors of the RNA polymerase II machinery, POLR3D/RPC4-POLR3E/RPC5 heterodimer and POLR3/CRPC3-POLR3F/RPC6-POLR3G/RPC7 heterotrimer.

It localises to the nucleus. DNA-dependent RNA polymerase catalyzes the transcription of DNA into RNA using the four ribonucleoside triphosphates as substrates. Specific peripheric component of RNA polymerase III (Pol III) which synthesizes small non-coding RNAs including 5S rRNA, snRNAs, tRNAs and miRNAs from at least 500 distinct genomic loci. Assembles with POLR3D/RPC4 forming a subcomplex that binds the Pol III core. Enables recruitment of Pol III at transcription initiation site and drives transcription initiation from both type 2 and type 3 DNA promoters. Required for efficient transcription termination and reinitiation. Plays a key role in sensing and limiting infection by intracellular bacteria and DNA viruses. Acts as a nuclear and cytosolic DNA sensor involved in innate immune response. Can sense non-self dsDNA that serves as template for transcription into dsRNA. The non-self RNA polymerase III transcripts, such as Epstein-Barr virus-encoded RNAs (EBERs) induce type I interferon and NF-kappa-B through the RIG-I pathway. In Mus musculus (Mouse), this protein is DNA-directed RNA polymerase III subunit RPC5.